Here is a 155-residue protein sequence, read N- to C-terminus: Transcriptional repressor NrdR (155 aa).

A zinc finger spans residues 3–34 (CPFCGHSNTQVLDTRMSEDGDAVRRRRRCEAC). The ATP-cone domain maps to 49 to 139 (PAIVKKNGSR…VYRSFEDVSE (91 aa)).

The protein belongs to the NrdR family. Requires Zn(2+) as cofactor.

Functionally, negatively regulates transcription of bacterial ribonucleotide reductase nrd genes and operons by binding to NrdR-boxes. The sequence is that of Transcriptional repressor NrdR from Cupriavidus necator (strain ATCC 17699 / DSM 428 / KCTC 22496 / NCIMB 10442 / H16 / Stanier 337) (Ralstonia eutropha).